Here is a 71-residue protein sequence, read N- to C-terminus: Pro-glucagon (71 aa).

The protein belongs to the glucagon family.

It is found in the secreted. Plays a key role in glucose metabolism and homeostasis. Regulates blood glucose by increasing gluconeogenesis and decreasing glycolysis. The chain is Pro-glucagon (gcg) from Piaractus mesopotamicus (Small-scaled pacu).